The sequence spans 185 residues: Ribosome-recycling factor (185 aa).

It belongs to the RRF family.

The protein resides in the cytoplasm. Responsible for the release of ribosomes from messenger RNA at the termination of protein biosynthesis. May increase the efficiency of translation by recycling ribosomes from one round of translation to another. The sequence is that of Ribosome-recycling factor from Salinispora tropica (strain ATCC BAA-916 / DSM 44818 / JCM 13857 / NBRC 105044 / CNB-440).